A 258-amino-acid chain; its full sequence is Isoprenyl transferase (258 aa).

D38 is an active-site residue. A Mg(2+)-binding site is contributed by D38. Residues 39-42 (GNGR), W43, R51, H55, and 83-85 (STE) each bind substrate. N86 acts as the Proton acceptor in catalysis. Substrate is bound by residues W87, R89, R206, and 212–214 (RIS). E225 provides a ligand contact to Mg(2+).

It belongs to the UPP synthase family. Homodimer. It depends on Mg(2+) as a cofactor.

In terms of biological role, catalyzes the condensation of isopentenyl diphosphate (IPP) with allylic pyrophosphates generating different type of terpenoids. The polypeptide is Isoprenyl transferase (Bacillus anthracis).